A 499-amino-acid polypeptide reads, in one-letter code: Alpha-L-arabinofuranosidase B (499 aa).

The first 18 residues, 1–18, serve as a signal peptide directing secretion; sequence MFSRRNLVALGLAATVSA. Residues asparagine 83 and asparagine 202 are each glycosylated (N-linked (GlcNAc...) asparagine).

The protein belongs to the glycosyl hydrolase 54 family.

It catalyses the reaction Hydrolysis of terminal non-reducing alpha-L-arabinofuranoside residues in alpha-L-arabinosides.. It participates in glycan metabolism; L-arabinan degradation. Able to hydrolyze 1,5-, 1,3- and 1,2-alpha-linkages not only in L-arabinofuranosyl oligosaccharides, but also in polysac-charides containing terminal non-reducing L-arabinofuranoses in side chains, like L-arabinan, arabinogalactan and arabinoxylan. This chain is Alpha-L-arabinofuranosidase B (abfB), found in Aspergillus niger.